We begin with the raw amino-acid sequence, 431 residues long: Histidine--tRNA ligase (431 aa).

The protein belongs to the class-II aminoacyl-tRNA synthetase family. In terms of assembly, homodimer.

The protein resides in the cytoplasm. It catalyses the reaction tRNA(His) + L-histidine + ATP = L-histidyl-tRNA(His) + AMP + diphosphate + H(+). In Ligilactobacillus salivarius (strain UCC118) (Lactobacillus salivarius), this protein is Histidine--tRNA ligase.